We begin with the raw amino-acid sequence, 303 residues long: tRNA dimethylallyltransferase (303 aa).

ATP is bound at residue 11–18 (GPTGVGKS). Residue 13–18 (TGVGKS) coordinates substrate. Interaction with substrate tRNA stretches follow at residues 36–39 (DSRQ) and 159–163 (QRVLR).

This sequence belongs to the IPP transferase family. Monomer. Mg(2+) serves as cofactor.

It carries out the reaction adenosine(37) in tRNA + dimethylallyl diphosphate = N(6)-dimethylallyladenosine(37) in tRNA + diphosphate. Its function is as follows. Catalyzes the transfer of a dimethylallyl group onto the adenine at position 37 in tRNAs that read codons beginning with uridine, leading to the formation of N6-(dimethylallyl)adenosine (i(6)A). The sequence is that of tRNA dimethylallyltransferase from Lawsonia intracellularis (strain PHE/MN1-00).